The primary structure comprises 524 residues: Translation initiation factor eIF2B subunit delta (524 aa).

The tract at residues Met1–Leu155 is disordered. At Ala2 the chain carries N-acetylalanine. 2 stretches are compositionally biased toward basic and acidic residues: residues Val8 to Leu20 and Leu31 to Arg40. The residue at position 12 (Ser12) is a Phosphoserine. The segment covering Lys41–Lys51 has biased composition (basic residues). Residue Thr86 is modified to Phosphothreonine. Over residues Ser96 to Glu121 the composition is skewed to basic and acidic residues. Residues Cys130–Gly140 show a composition bias toward polar residues. Positions Arg171–Leu180 are may bind the chemical integrated stress response (ISR) inhibitor ISRIB.

The protein belongs to the eIF-2B alpha/beta/delta subunits family. Component of the translation initiation factor 2B (eIF2B) complex which is a heterodecamer of two sets of five different subunits: alpha, beta, gamma, delta and epsilon. Subunits alpha, beta and delta comprise a regulatory subcomplex and subunits epsilon and gamma comprise a catalytic subcomplex. Within the complex, the hexameric regulatory complex resides at the center, with the two heterodimeric catalytic subcomplexes bound on opposite sides.

Its subcellular location is the cytoplasm. The protein resides in the cytosol. Activated by the chemical integrated stress response (ISR) inhibitor ISRIB which stimulates guanine nucleotide exchange factor activity for both phosphorylated and unphosphorylated eIF2. Functionally, acts as a component of the translation initiation factor 2B (eIF2B) complex, which catalyzes the exchange of GDP for GTP on eukaryotic initiation factor 2 (eIF2) gamma subunit. Its guanine nucleotide exchange factor activity is repressed when bound to eIF2 complex phosphorylated on the alpha subunit, thereby limiting the amount of methionyl-initiator methionine tRNA available to the ribosome and consequently global translation is repressed. The polypeptide is Translation initiation factor eIF2B subunit delta (Eif2b4) (Mus musculus (Mouse)).